A 606-amino-acid polypeptide reads, in one-letter code: Mitogen-activated protein kinase kinase kinase 7 (606 aa).

An interaction with MAPK8IP1 region spans residues 1 to 300 (MSTASAASSS…FPGADEPLQY (300 aa)). One can recognise a Protein kinase domain in the interval 36–291 (IEVEEVVGRG…KIMTHLMRYF (256 aa)). ATP-binding positions include 42-50 (VGRGAFGVV) and Lys-63. Lys-72 is covalently cross-linked (Glycyl lysine isopeptide (Lys-Gly) (interchain with G-Cter in ubiquitin)). The Proton acceptor role is filled by Asp-156. Residue Lys-158 forms a Glycyl lysine isopeptide (Lys-Gly) (interchain with G-Cter in ubiquitin) linkage. 2 positions are modified to (Microbial infection) O-acetylthreonine; by Yersinia YopJ; alternate: Thr-184 and Thr-187. Residues Thr-184 and Thr-187 each carry the phosphothreonine; by autocatalysis; alternate modification. Ser-192 is subject to Phosphoserine; by autocatalysis. Lys-209 is covalently cross-linked (Glycyl lysine isopeptide (Lys-Gly) (interchain with G-Cter in ubiquitin)). The interval 301 to 338 (PCQYSDEGQSNSATSTGSFMDIASTNTSNKSDTNMEQV) is disordered. Residues 306 to 338 (DEGQSNSATSTGSFMDIASTNTSNKSDTNMEQV) show a composition bias toward polar residues. Thr-341 is subject to (Microbial infection) O-acetylthreonine; by Yersinia YopJ; alternate. Residues 354-391 (KNQAKQQSESGRLSLGASRGSSVESLPPTSEGKRMSAD) form a disordered region. The segment covering 361-375 (SESGRLSLGASRGSS) has biased composition (low complexity). Ser-367, Ser-389, and Ser-439 each carry phosphoserine. Residues 443–452 (LTVTGTEPGQ) are compositionally biased toward polar residues. The interval 443-493 (LTVTGTEPGQVSSRSSSPSVRMITTSGPTSEKPTRSHPWTPDDSTDTNGSD) is disordered. (Microbial infection) O-acetylthreonine; by Yersinia YopJ; alternate is present on residues Thr-444, Thr-446, and Thr-448. A compositionally biased stretch (low complexity) spans 453–463 (VSSRSSSPSVR). Position 455 is a phosphoserine (Ser-455). Positions 464 to 473 (MITTSGPTSE) are enriched in polar residues. Thr-467 bears the (Microbial infection) O-acetylthreonine; by Yersinia YopJ; alternate mark.

Belongs to the protein kinase superfamily. STE Ser/Thr protein kinase family. MAP kinase kinase kinase subfamily. In terms of assembly, can form homodimer. Binds both upstream activators and downstream substrates in multimolecular complexes. Interacts with TAB1/MAP3K7IP1, TAB2/MAP3K7IP2 and TAB3/MAP3K7IP3. Identified in the TRIKA2 complex composed of MAP3K7/TAK1, TAB1/MAP3K7IP1 and TAB2/MAP3K7IP2. Interacts with PPM1L and PPM1B/PP2CB. Interaction with PP2A and PPP6C leads to its repressed activity. Interacts with TRAF6 and TAB1/MAP3K7IP1; during IL-1 signaling. Interacts with TAOK1 and TAOK2; interaction with TAOK2 interferes with MAP3K7 interaction with IKKA, thus preventing NF-kappa-B activation. Interacts with DYNC2I2 (via WD domains). Interacts with CYLD and RBCK1. Interacts with TGFBR1; induces MAP3K7/TAK1 activation by TRAF6. Interacts with MAPK8IP1 and SMAD6. Interacts with isoform 1 of VRK2. Interacts with DAB2; the interaction is induced by TGF-beta stimulation and may mediate TGF-beta stimulated JNK activation. Interacts with TRIM5. Part of a complex containing ITCH, NDFIP1 and MAP3K7. Interacts with IFIT5; the interaction synergizes the recruitment of IKK to MAP3K7 and enhances IKK phosphorylation. Interacts with PLEKHM1 (via N- and C-terminus). Interacts with TRIM8. Found in a complex with SH3RF1, RAC2, MAP2K7/MKK7, MAPK8IP1/JIP1, MAPK8/JNK1 and MAPK9/JNK2. Interacts with SASH1. Interacts with RIPK1. As to quaternary structure, (Microbial infection) Interacts with herpes simplex virus 2 protein US2; this interaction induces MAP3K7 phosphorylation and subsequent activation. Mg(2+) is required as a cofactor. Association with TAB1/MAP3K7IP1 promotes autophosphorylation at Ser-192 and subsequent activation. Association with TAB2/MAP3K7IP2, itself associated with free unanchored Lys-63 polyubiquitin chain, promotes autophosphorylation and subsequent activation of MAP3K7. Dephosphorylation at Ser-192 by PPM1B/PP2CB and at Thr-187 by PP2A and PPP6C leads to inactivation. Post-translationally, 'Lys-48'-linked polyubiquitination at Lys-72 is induced by TNFalpha, and leads to proteasomal degradation. Undergoes 'Lys-48'-linked polyubiquitination catalyzed by ITCH. Requires 'Lys-63'-linked polyubiquitination for autophosphorylation and subsequent activation. 'Lys-63'-linked ubiquitination does not lead to proteasomal degradation. Deubiquitinated by CYLD, a protease that selectively cleaves 'Lys-63'-linked ubiquitin chains. Deubiquitinated by Y.enterocolitica YopP. Deubiquitinated by USP19; leading to negative regulation of TNF-alpha- and IL-1beta-triggered NF-kappa-B activation. In terms of processing, (Microbial infection) Cleaved and inactivated by the proteases 3C of coxsackievirus A16 and human enterovirus D68, allowing the virus to disrupt TRAF6-triggered NF-kappa-B induction. (Microbial infection) Acetylation of Thr-184 and Thr-187 by Yersinia YopJ prevents phosphorylation and activation, thus blocking the MAPK signaling pathway. In terms of tissue distribution, isoform 1A is the most abundant in ovary, skeletal muscle, spleen and blood mononuclear cells. Isoform 1B is highly expressed in brain, kidney and small intestine. Isoform 1C is the major form in prostate. Isoform 1D is the less abundant form.

It is found in the cytoplasm. Its subcellular location is the cell membrane. It carries out the reaction L-seryl-[protein] + ATP = O-phospho-L-seryl-[protein] + ADP + H(+). The catalysed reaction is L-threonyl-[protein] + ATP = O-phospho-L-threonyl-[protein] + ADP + H(+). With respect to regulation, activated by pro-inflammatory cytokines and in response to physical and chemical stresses, including osmotic stress, oxidative stress, arsenic and ultraviolet light irradiation. Activated by 'Lys-63'-linked polyubiquitination and by autophosphorylation. Association with TAB1/MAP3K7IP1 and TAB2/MAP3K7IP2 promotes activation through autophosphorylation, whereas PPM1B/PP2CB, PP2A and PPP6C dephosphorylation leads to inactivation. Ceramides are also able to activate MAP3K7/TAK1. Its function is as follows. Serine/threonine kinase which acts as an essential component of the MAP kinase signal transduction pathway. Plays an important role in the cascades of cellular responses evoked by changes in the environment. Mediates signal transduction of TRAF6, various cytokines including interleukin-1 (IL-1), transforming growth factor-beta (TGFB), TGFB-related factors like BMP2 and BMP4, toll-like receptors (TLR), tumor necrosis factor receptor CD40 and B-cell receptor (BCR). Once activated, acts as an upstream activator of the MKK/JNK signal transduction cascade and the p38 MAPK signal transduction cascade through the phosphorylation and activation of several MAP kinase kinases like MAP2K1/MEK1, MAP2K3/MKK3, MAP2K6/MKK6 and MAP2K7/MKK7. These MAP2Ks in turn activate p38 MAPKs and c-jun N-terminal kinases (JNKs); both p38 MAPK and JNK pathways control the transcription factors activator protein-1 (AP-1). Independently of MAP2Ks and p38 MAPKs, acts as a key activator of NF-kappa-B by promoting activation of the I-kappa-B-kinase (IKK) core complex. Mechanistically, recruited to polyubiquitin chains of RIPK2 and IKBKG/NEMO via TAB2/MAP3K7IP2 and TAB3/MAP3K7IP3, and catalyzes phosphorylation and activation of IKBKB/IKKB component of the IKK complex, leading to NF-kappa-B activation. In osmotic stress signaling, plays a major role in the activation of MAPK8/JNK1, but not that of NF-kappa-B. Promotes TRIM5 capsid-specific restriction activity. Phosphorylates RIPK1 at 'Ser-321' which positively regulates RIPK1 interaction with RIPK3 to promote necroptosis but negatively regulates RIPK1 kinase activity and its interaction with FADD to mediate apoptosis. Phosphorylates STING1 in response to cGAMP-activation, promoting association between STEEP1 and STING1 and STING1 translocation to COPII vesicles. The sequence is that of Mitogen-activated protein kinase kinase kinase 7 from Homo sapiens (Human).